The primary structure comprises 1043 residues: Phosphatidylinositol 4,5-bisphosphate 3-kinase catalytic subunit delta isoform (1043 aa).

The region spanning Glu-16–Glu-105 is the PI3K-ABD domain. Residues Asn-187–His-278 form the PI3K-RBD domain. Residues Asp-287–Ser-312 are disordered. The C2 PI3K-type domain occupies Leu-319–Pro-476. The region spanning Arg-496 to Gly-673 is the PIK helical domain. Tyr-523 carries the post-translational modification Phosphotyrosine. Positions Cys-744–Trp-1026 constitute a PI3K/PI4K catalytic domain. A G-loop region spans residues Phe-750–Lys-756. The tract at residues Gly-889–Asn-897 is catalytic loop. The interval His-908 to Thr-934 is activation loop. Ser-1038 is subject to Phosphoserine; by autocatalysis.

This sequence belongs to the PI3/PI4-kinase family. As to quaternary structure, heterodimer of a catalytic subunit PIK3CD and a p85 regulatory subunit (PIK3R1, PIK3R2 or PIK3R3). Interacts with ERAS and HRAS. In terms of processing, autophosphorylation on Ser-1038 results in the almost complete inactivation of the lipid kinase activity. In terms of tissue distribution, abundantly expressed in adult mouse spleen as well as in testis. Isoform 1 is expressed in spleen and lung (at protein level). Isoform 1 is expressed predominantly in leukocytes.

The protein resides in the cytoplasm. It carries out the reaction a 1,2-diacyl-sn-glycero-3-phospho-(1D-myo-inositol-4,5-bisphosphate) + ATP = a 1,2-diacyl-sn-glycero-3-phospho-(1D-myo-inositol-3,4,5-trisphosphate) + ADP + H(+). The enzyme catalyses a 1,2-diacyl-sn-glycero-3-phospho-(1D-myo-inositol) + ATP = a 1,2-diacyl-sn-glycero-3-phospho-(1D-myo-inositol-3-phosphate) + ADP + H(+). The catalysed reaction is 1-octadecanoyl-2-(5Z,8Z,11Z,14Z)-eicosatetraenoyl-sn-glycero-3-phospho-1D-myo-inositol 4,5-bisphosphate + ATP = 1-octadecanoyl-2-(5Z,8Z,11Z,14Z-eicosatetraenoyl)-sn-glycero-3-phospho-(1D-myo-inositol 3,4,5-triphosphate) + ADP + H(+). The protein operates within phospholipid metabolism; phosphatidylinositol phosphate biosynthesis. Its activity is regulated as follows. Activated by growth factors and cytokine receptors through a tyrosine-kinase-dependent mechanism. Activated by RAS. IC87114 inhibits lipid kinase activity and is selective in cells at doses up to 5-10 uM. Among other effects, IC87114 reduces allergic responses, prevents the recruitment of antigen-specific T cells into target tissue, and affects natural killer cell chemotaxis. Phosphoinositide-3-kinase (PI3K) phosphorylates phosphatidylinositol (PI) and its phosphorylated derivatives at position 3 of the inositol ring to produce 3-phosphoinositides. Uses ATP and PtdIns(4,5)P2 (phosphatidylinositol 4,5-bisphosphate) to generate phosphatidylinositol 3,4,5-trisphosphate (PIP3). PIP3 plays a key role by recruiting PH domain-containing proteins to the membrane, including AKT1 and PDPK1, activating signaling cascades involved in cell growth, survival, proliferation, motility and morphology. Mediates immune responses. Plays a role in B-cell development, proliferation, migration, and function. Required for B-cell receptor (BCR) signaling. Mediates B-cell proliferation response to anti-IgM, anti-CD40 and IL4 stimulation. Promotes cytokine production in response to TLR4 and TLR9. Required for antibody class switch mediated by TLR9. Involved in the antigen presentation function of B-cells. Involved in B-cell chemotaxis in response to CXCL13 and sphingosine 1-phosphate (S1P). Required for proliferation, signaling and cytokine production of naive, effector and memory T-cells. Required for T-cell receptor (TCR) signaling. Mediates TCR signaling events at the immune synapse. Activation by TCR leads to antigen-dependent memory T-cell migration and retention to antigenic tissues. Together with PIK3CG participates in T-cell development. Contributes to T-helper cell expansion and differentiation. Required for T-cell migration mediated by homing receptors SELL/CD62L, CCR7 and S1PR1 and antigen dependent recruitment of T-cells. Together with PIK3CG is involved in natural killer (NK) cell development and migration towards the sites of inflammation. Participates in NK cell receptor activation. Plays a role in NK cell maturation and cytokine production. Together with PIK3CG is involved in neutrophil chemotaxis and extravasation. Together with PIK3CG participates in neutrophil respiratory burst. Plays important roles in mast-cell development and mast cell mediated allergic response. Involved in stem cell factor (SCF)-mediated proliferation, adhesion and migration. Required for allergen-IgE-induced degranulation and cytokine release. The lipid kinase activity is required for its biological function. The protein is Phosphatidylinositol 4,5-bisphosphate 3-kinase catalytic subunit delta isoform (Pik3cd) of Mus musculus (Mouse).